A 258-amino-acid polypeptide reads, in one-letter code: Imidazole glycerol phosphate synthase subunit HisF (258 aa).

Residues aspartate 11 and aspartate 130 contribute to the active site.

Belongs to the HisA/HisF family. Heterodimer of HisH and HisF.

The protein resides in the cytoplasm. It catalyses the reaction 5-[(5-phospho-1-deoxy-D-ribulos-1-ylimino)methylamino]-1-(5-phospho-beta-D-ribosyl)imidazole-4-carboxamide + L-glutamine = D-erythro-1-(imidazol-4-yl)glycerol 3-phosphate + 5-amino-1-(5-phospho-beta-D-ribosyl)imidazole-4-carboxamide + L-glutamate + H(+). It participates in amino-acid biosynthesis; L-histidine biosynthesis; L-histidine from 5-phospho-alpha-D-ribose 1-diphosphate: step 5/9. In terms of biological role, IGPS catalyzes the conversion of PRFAR and glutamine to IGP, AICAR and glutamate. The HisF subunit catalyzes the cyclization activity that produces IGP and AICAR from PRFAR using the ammonia provided by the HisH subunit. The sequence is that of Imidazole glycerol phosphate synthase subunit HisF from Yersinia pestis (strain Pestoides F).